Consider the following 449-residue polypeptide: Phosphoglucosamine mutase (449 aa).

Ser103 acts as the Phosphoserine intermediate in catalysis. Positions 103, 240, 242, and 244 each coordinate Mg(2+). Phosphoserine is present on Ser103.

It belongs to the phosphohexose mutase family. Requires Mg(2+) as cofactor. Activated by phosphorylation.

It catalyses the reaction alpha-D-glucosamine 1-phosphate = D-glucosamine 6-phosphate. In terms of biological role, catalyzes the conversion of glucosamine-6-phosphate to glucosamine-1-phosphate. The chain is Phosphoglucosamine mutase from Thermobifida fusca (strain YX).